The following is a 139-amino-acid chain: MEDLLTNPLIIAAIIGIISAIFGKKSKEEKQNSQKRKKPQHVQSASPQKKQSKEDAPAPIPNRMEQARREAEERRRETARNLKGLERDLAAAKQKTVYTKQKMLQVNKDTVVQGIVLGEVFGPPRAKKPHRTMRPARKN.

Residues 3-23 (DLLTNPLIIAAIIGIISAIFG) traverse the membrane as a helical segment. The segment at 25–87 (KSKEEKQNSQ…TARNLKGLER (63 aa)) is disordered. A coiled-coil region spans residues 62-97 (NRMEQARREAEERRRETARNLKGLERDLAAAKQKTV). The span at 65 to 87 (EQARREAEERRRETARNLKGLER) shows a compositional bias: basic and acidic residues.

It is found in the cell membrane. In Bacillus subtilis (strain 168), this protein is Membrane protein YqfB (yqfB).